The primary structure comprises 141 residues: ATP synthase F(0) complex subunit C2, mitochondrial (141 aa).

The transit peptide at 1–66 directs the protein to the mitochondrion; that stretch reads MYACSKFVST…RSFQTSAISR (66 aa). Residues 82-102 form a helical membrane-spanning segment; sequence VGVAGSGAGIGTVFGSLIIGY. An N6,N6,N6-trimethyllysine modification is found at Lys-109. The chain crosses the membrane as a helical span at residues 117-137; the sequence is ILGFALSEAMGLFCLMVAFLI.

It belongs to the ATPase C chain family. As to quaternary structure, F-type ATPases have 2 components, CF(1) - the catalytic core - and CF(0) - the membrane proton channel. CF(1) has five subunits: alpha(3), beta(3), gamma(1), delta(1), epsilon(1). CF(0) has three main subunits: a, b and c. Interacts with DNAJC30; interaction is direct. Post-translationally, trimethylated by ATPSCKMT at Lys-109. Methylation is required for proper incorporation of the C subunit into the ATP synthase complex and mitochondrial respiration.

Its subcellular location is the mitochondrion membrane. In terms of biological role, mitochondrial membrane ATP synthase (F(1)F(0) ATP synthase or Complex V) produces ATP from ADP in the presence of a proton gradient across the membrane which is generated by electron transport complexes of the respiratory chain. F-type ATPases consist of two structural domains, F(1) - containing the extramembraneous catalytic core and F(0) - containing the membrane proton channel, linked together by a central stalk and a peripheral stalk. During catalysis, ATP synthesis in the catalytic domain of F(1) is coupled via a rotary mechanism of the central stalk subunits to proton translocation. Part of the complex F(0) domain. A homomeric c-ring of probably 10 subunits is part of the complex rotary element. This chain is ATP synthase F(0) complex subunit C2, mitochondrial, found in Rattus norvegicus (Rat).